The sequence spans 562 residues: NAD-dependent malic enzyme (562 aa).

Tyr101 functions as the Proton donor in the catalytic mechanism. Arg154 is an NAD(+) binding site. Catalysis depends on Lys172, which acts as the Proton acceptor. A divalent metal cation contacts are provided by Glu243, Asp244, and Asp267. NAD(+) is bound by residues Asp267 and Asn415.

It belongs to the malic enzymes family. Homotetramer. It depends on Mg(2+) as a cofactor. Requires Mn(2+) as cofactor.

It carries out the reaction (S)-malate + NAD(+) = pyruvate + CO2 + NADH. The catalysed reaction is oxaloacetate + H(+) = pyruvate + CO2. This chain is NAD-dependent malic enzyme, found in Shewanella loihica (strain ATCC BAA-1088 / PV-4).